A 283-amino-acid chain; its full sequence is Thymidylate synthase (283 aa).

Arg22 is a dUMP binding site. The active-site Nucleophile is the Cys160. Residues 180–183 (RSCD), Asn191, and 221–223 (HIY) contribute to the dUMP site. Residue Asp183 coordinates (6R)-5,10-methylene-5,6,7,8-tetrahydrofolate. (6R)-5,10-methylene-5,6,7,8-tetrahydrofolate is bound at residue Ser282.

Belongs to the thymidylate synthase family. Bacterial-type ThyA subfamily. Homodimer.

Its subcellular location is the cytoplasm. It carries out the reaction dUMP + (6R)-5,10-methylene-5,6,7,8-tetrahydrofolate = 7,8-dihydrofolate + dTMP. Its pathway is pyrimidine metabolism; dTTP biosynthesis. Functionally, catalyzes the reductive methylation of 2'-deoxyuridine-5'-monophosphate (dUMP) to 2'-deoxythymidine-5'-monophosphate (dTMP) while utilizing 5,10-methylenetetrahydrofolate (mTHF) as the methyl donor and reductant in the reaction, yielding dihydrofolate (DHF) as a by-product. This enzymatic reaction provides an intracellular de novo source of dTMP, an essential precursor for DNA biosynthesis. The protein is Thymidylate synthase of Shewanella pealeana (strain ATCC 700345 / ANG-SQ1).